Consider the following 418-residue polypeptide: Trans-acting enoyl reductase (418 aa).

It belongs to the saccharopine dehydrogenase family. Enoyl reductase subfamily.

Its function is as follows. Involved in the reduction of the double bond between C-4 and C-5 during phthiocerol dimycocerosates (DIM A) and glycosylated phenolphthiocerol dimycocerosates (PGL) biosynthesis. The protein is Trans-acting enoyl reductase of Mycobacterium tuberculosis (strain ATCC 25177 / H37Ra).